A 139-amino-acid chain; its full sequence is Putative pre-16S rRNA nuclease (139 aa).

It belongs to the YqgF nuclease family.

The protein resides in the cytoplasm. In terms of biological role, could be a nuclease involved in processing of the 5'-end of pre-16S rRNA. The protein is Putative pre-16S rRNA nuclease of Streptococcus uberis (strain ATCC BAA-854 / 0140J).